The primary structure comprises 251 residues: NADH-quinone oxidoreductase subunit B (251 aa).

Positions 38, 39, 104, and 134 each coordinate [4Fe-4S] cluster. The tract at residues 208-251 (RKGLPPGSMTDVGWIPPEARERLKAGRGAGASGSGEREEGKEGA) is disordered. Positions 242–251 (GEREEGKEGA) are enriched in basic and acidic residues.

Belongs to the complex I 20 kDa subunit family. As to quaternary structure, NDH-1 is composed of 14 different subunits. Subunits NuoB, C, D, E, F, and G constitute the peripheral sector of the complex. Requires [4Fe-4S] cluster as cofactor.

Its subcellular location is the cell membrane. It catalyses the reaction a quinone + NADH + 5 H(+)(in) = a quinol + NAD(+) + 4 H(+)(out). In terms of biological role, NDH-1 shuttles electrons from NADH, via FMN and iron-sulfur (Fe-S) centers, to quinones in the respiratory chain. The immediate electron acceptor for the enzyme in this species is believed to be a menaquinone. Couples the redox reaction to proton translocation (for every two electrons transferred, four hydrogen ions are translocated across the cytoplasmic membrane), and thus conserves the redox energy in a proton gradient. This is NADH-quinone oxidoreductase subunit B from Rubrobacter xylanophilus (strain DSM 9941 / JCM 11954 / NBRC 16129 / PRD-1).